We begin with the raw amino-acid sequence, 335 residues long: NAC domain-containing protein 40 (335 aa).

Residues 14 to 156 (LFPGFRFSPT…ALVVCRLRKN (143 aa)) enclose the NAC domain. The DNA-binding element occupies 112-162 (VGTKRTLVFHIGRAPRGERTEWIMHEYCIHGAPQDALVVCRLRKNADFRAS). Residues 245–254 (PTNPTHQETI) show a composition bias toward polar residues. Residues 245 to 267 (PTNPTHQETISSESSSKRSKCGI) are disordered. A helical membrane pass occupies residues 313-333 (VLATTVFLAILFSFFWTVLIA).

In terms of processing, proteolytically cleaved, probably by metalloprotease activity. This cleavage mediates a translocation from the plasma membrane to the nucleus. Expressed in seeds, leaves, roots and inflorescence. Expressed in roots, rosette leaves, cauline leaves, shoot apex, stems and flowers.

The protein resides in the cell membrane. The protein localises to the nucleus. Transcriptional activator activated by proteolytic cleavage through regulated intramembrane proteolysis (RIP), probably via metalloprotease activity. Regulates gibberellic acid-mediated salt-responsive repression of seed germination and flowering via FT, thus delaying seed germination under high salinity conditions. The sequence is that of NAC domain-containing protein 40 from Arabidopsis thaliana (Mouse-ear cress).